The sequence spans 174 residues: MEQEWLNVGKIVNTHGVRGEVRVVSKTDFPEERYKKGSVLYIFKQGQGEPLKVTVASHRQHKQFDLLTFEEISSLNEAELLKESILKVEKEHLGSLDEGEFYFHQIIGCEVYDEENQLVGQIKEILTPGANDVWVVGRKGKKDALIPYIPSVVKKIDISSKTIHIEVMEGLIDE.

The PRC barrel domain maps to 98–171 (EGEFYFHQII…TIHIEVMEGL (74 aa)).

It belongs to the RimM family. In terms of assembly, binds ribosomal protein uS19.

It localises to the cytoplasm. An accessory protein needed during the final step in the assembly of 30S ribosomal subunit, possibly for assembly of the head region. Essential for efficient processing of 16S rRNA. May be needed both before and after RbfA during the maturation of 16S rRNA. It has affinity for free ribosomal 30S subunits but not for 70S ribosomes. This chain is Ribosome maturation factor RimM, found in Bacillus pumilus (strain SAFR-032).